The following is a 295-amino-acid chain: Phosphatidylserine decarboxylase proenzyme (295 aa).

Catalysis depends on charge relay system; for autoendoproteolytic cleavage activity residues Asp-113, His-169, and Ser-256. Ser-256 acts as the Schiff-base intermediate with substrate; via pyruvic acid; for decarboxylase activity in catalysis. Ser-256 bears the Pyruvic acid (Ser); by autocatalysis mark.

This sequence belongs to the phosphatidylserine decarboxylase family. PSD-B subfamily. Prokaryotic type II sub-subfamily. Heterodimer of a large membrane-associated beta subunit and a small pyruvoyl-containing alpha subunit. Pyruvate is required as a cofactor. Post-translationally, is synthesized initially as an inactive proenzyme. Formation of the active enzyme involves a self-maturation process in which the active site pyruvoyl group is generated from an internal serine residue via an autocatalytic post-translational modification. Two non-identical subunits are generated from the proenzyme in this reaction, and the pyruvate is formed at the N-terminus of the alpha chain, which is derived from the carboxyl end of the proenzyme. The autoendoproteolytic cleavage occurs by a canonical serine protease mechanism, in which the side chain hydroxyl group of the serine supplies its oxygen atom to form the C-terminus of the beta chain, while the remainder of the serine residue undergoes an oxidative deamination to produce ammonia and the pyruvoyl prosthetic group on the alpha chain. During this reaction, the Ser that is part of the protease active site of the proenzyme becomes the pyruvoyl prosthetic group, which constitutes an essential element of the active site of the mature decarboxylase.

The protein localises to the cell membrane. It catalyses the reaction a 1,2-diacyl-sn-glycero-3-phospho-L-serine + H(+) = a 1,2-diacyl-sn-glycero-3-phosphoethanolamine + CO2. The protein operates within phospholipid metabolism; phosphatidylethanolamine biosynthesis; phosphatidylethanolamine from CDP-diacylglycerol: step 2/2. Catalyzes the formation of phosphatidylethanolamine (PtdEtn) from phosphatidylserine (PtdSer). This chain is Phosphatidylserine decarboxylase proenzyme, found in Clostridium botulinum (strain ATCC 19397 / Type A).